We begin with the raw amino-acid sequence, 388 residues long: Probable proton-coupled zinc antiporter SLC30A3 (388 aa).

The span at 1-13 (MEPSPTTGGSETT) shows a compositional bias: polar residues. 2 disordered regions span residues 1-30 (MEPS…GLRL) and 35-54 (TEAP…SFHH). The Cytoplasmic segment spans residues 1–75 (MEPSPTTGGS…TPERMQAQRQ (75 aa)). The chain crosses the membrane as a helical span at residues 76-96 (LCTACAVCCVFMAGEVVGGYL). Topologically, residues 97 to 105 (AHSLAIMTD) are lumenal. Residues 106 to 126 (AAHLLADVGSMMGSLFSLWLS) form a helical membrane-spanning segment. 2 residues coordinate Zn(2+): histidine 108 and aspartate 112. The Cytoplasmic segment spans residues 127–145 (TRPATRTMTFGWHRSETLG). Residues 146-166 (ALASVVSLWMVTGILLYLAFI) form a helical membrane-spanning segment. Residues 167 to 177 (RLLHSDYHIEG) lie on the Lumenal side of the membrane. A helical transmembrane segment spans residues 178 to 198 (GAMLLTASIAVCANLLMAFVL). Topologically, residues 199 to 235 (HQAGPPHSHGSRGAEYAPLEEGSGEPLPLGNTSVRAA) are cytoplasmic. Residues 236 to 256 (FVHVLGDLLQSLGVLIASILI) form a helical membrane-spanning segment. Residues histidine 238 and aspartate 242 each contribute to the Zn(2+) site. Residues 257 to 264 (YFKPQYKA) are Lumenal-facing. The chain crosses the membrane as a helical span at residues 265 to 285 (ADPISTFLFSICALGSTAPTL). Over 286-388 (RDVLRVLMEG…CLRCQEPPQA (103 aa)) the chain is Cytoplasmic.

The protein belongs to the cation diffusion facilitator (CDF) transporter (TC 2.A.4) family. SLC30A subfamily. As to quaternary structure, homodimer. Homodimerization could regulate efficiency of zinc transport. Interacts with TMEM163.

The protein localises to the cytoplasmic vesicle. Its subcellular location is the secretory vesicle. The protein resides in the synaptic vesicle membrane. It localises to the synapse. It is found in the synaptosome. The protein localises to the late endosome membrane. Its subcellular location is the lysosome membrane. It carries out the reaction Zn(2+)(in) + 2 H(+)(out) = Zn(2+)(out) + 2 H(+)(in). Functionally, probable proton-coupled zinc ion antiporter mediating the import of zinc from cytoplasm into synaptic vesicles and participating to cellular zinc ion homeostasis in the brain. The chain is Probable proton-coupled zinc antiporter SLC30A3 from Bos taurus (Bovine).